Consider the following 247-residue polypeptide: Adenosine 5'-phosphosulfate reductase (247 aa).

[4Fe-4S] cluster contacts are provided by Cys-133, Cys-134, Cys-216, and Cys-219. The disordered stretch occupies residues 222–247; sequence KPAPGSDPRSGRWAGASKTECGLHAS. The active-site Nucleophile; cysteine thiosulfonate intermediate is Cys-242.

It belongs to the PAPS reductase family. CysH subfamily. The cofactor is [4Fe-4S] cluster.

It localises to the cytoplasm. It carries out the reaction [thioredoxin]-disulfide + sulfite + AMP + 2 H(+) = adenosine 5'-phosphosulfate + [thioredoxin]-dithiol. The protein operates within sulfur metabolism; hydrogen sulfide biosynthesis; sulfite from sulfate. Functionally, catalyzes the formation of sulfite from adenosine 5'-phosphosulfate (APS) using thioredoxin as an electron donor. The sequence is that of Adenosine 5'-phosphosulfate reductase from Rhodococcus erythropolis (strain PR4 / NBRC 100887).